A 252-amino-acid chain; its full sequence is MILHAQAKHGKPGLPWLVFLHGFSGDCHEWQEVGEAFADYSRLYVDLPGHGGSAAISVDGFDDVTGLLRKTLVSYNILNFWLVGYSLGGRVAMMAACQGMPGLCGVIVEGGHPGLQSAEQRAERQLSDRQWAQRFRSEPLTAVFTDWYQQPVFASLNDDQRRELVALRSNNNGATLAAMLEATSLAVQPDLRANLSARTFAFYYLCGERDSKFRALAAELAADCHVIPRAGHNTHRENPAGVIASLAQILRF.

The protein belongs to the AB hydrolase superfamily. MenH family. Monomer.

The catalysed reaction is 5-enolpyruvoyl-6-hydroxy-2-succinyl-cyclohex-3-ene-1-carboxylate = (1R,6R)-6-hydroxy-2-succinyl-cyclohexa-2,4-diene-1-carboxylate + pyruvate. It functions in the pathway quinol/quinone metabolism; 1,4-dihydroxy-2-naphthoate biosynthesis; 1,4-dihydroxy-2-naphthoate from chorismate: step 3/7. Its pathway is quinol/quinone metabolism; menaquinone biosynthesis. Its function is as follows. Catalyzes a proton abstraction reaction that results in 2,5-elimination of pyruvate from 2-succinyl-5-enolpyruvyl-6-hydroxy-3-cyclohexene-1-carboxylate (SEPHCHC) and the formation of 2-succinyl-6-hydroxy-2,4-cyclohexadiene-1-carboxylate (SHCHC). The sequence is that of 2-succinyl-6-hydroxy-2,4-cyclohexadiene-1-carboxylate synthase from Escherichia fergusonii (strain ATCC 35469 / DSM 13698 / CCUG 18766 / IAM 14443 / JCM 21226 / LMG 7866 / NBRC 102419 / NCTC 12128 / CDC 0568-73).